The sequence spans 148 residues: Lysozyme C-1 (148 aa).

The N-terminal stretch at 1–18 is a signal peptide; that stretch reads MKALLVLGFLLLSASVQA. The region spanning 19 to 148 is the C-type lysozyme domain; sequence KIYERCQFAR…LSGYIRNCGV (130 aa). Intrachain disulfides connect Cys-24/Cys-146, Cys-48/Cys-134, Cys-83/Cys-99, and Cys-95/Cys-113. Catalysis depends on residues Glu-53 and Asp-71.

Belongs to the glycosyl hydrolase 22 family. In terms of assembly, monomer. As to expression, expressed in lung, small intestine and spleen.

The protein resides in the secreted. It catalyses the reaction Hydrolysis of (1-&gt;4)-beta-linkages between N-acetylmuramic acid and N-acetyl-D-glucosamine residues in a peptidoglycan and between N-acetyl-D-glucosamine residues in chitodextrins.. In terms of biological role, lysozymes have primarily a bacteriolytic function; those in tissues and body fluids are associated with the monocyte-macrophage system and enhance the activity of immunoagents. In the intestine they may also have a digestive function. The chain is Lysozyme C-1 (Lyz1) from Rattus norvegicus (Rat).